A 394-amino-acid chain; its full sequence is uncharacterized protein (394 aa).

Phosphoserine occurs at positions 117 and 121. 3 disordered regions span residues 177-295, 315-347, and 370-394; these read DSDE…PGTF, KRSI…GSLS, and SSEV…AHRV. Residues 178 to 190 are compositionally biased toward acidic residues; it reads SDEEDEVDDEEIE. Composition is skewed to polar residues over residues 191-207 and 216-230; these read SFNS…NSRY and EKQS…VSQI. Composition is skewed to acidic residues over residues 231 to 263 and 284 to 295; these read SDDE…DDED and IPDDTDFVPGTF. Positions 370–379 are enriched in polar residues; that stretch reads SSEVLRNSKS. Serine 379 bears the Phosphoserine mark.

It localises to the nucleus. This is an uncharacterized protein from Schizosaccharomyces pombe (strain 972 / ATCC 24843) (Fission yeast).